The sequence spans 309 residues: Enoyl-CoA hydratase 2, peroxisomal (309 aa).

Substrate-binding positions include 95 to 96 (HG), Lys-124, 208 to 213 (DYNPLH), Gly-231, and Phe-261. The region spanning 183–295 (PQRQPLTVCE…TKVKERNKTV (113 aa)) is the MaoC-like domain. Residues 307–309 (SSL) carry the Microbody targeting signal motif.

Ubiquitous.

It is found in the peroxisome. The enzyme catalyses a (3R)-3-hydroxyacyl-CoA = a (2E)-enoyl-CoA + H2O. The protein operates within lipid metabolism; fatty acid beta-oxidation. Functionally, bidirectional monofunctional enoyl-CoA hydratase 2 involved in the degradation of even cis-unsaturated fatty acids. Devoid of 3-hydroxyacyl-CoA dehydrogenase activity. The protein is Enoyl-CoA hydratase 2, peroxisomal (ECH2) of Arabidopsis thaliana (Mouse-ear cress).